A 376-amino-acid chain; its full sequence is MRIDFHASPEPTLGVEWEFALVDRRTRDLRNDATHLFARAKPRLPDPDKLHKELLRNTVEVVSGVCHTVGEAMADLRRTLEVVVPAGDDLDLDLYGGGTHPFASWTVQQLSEGHRYEELINRTQWWGRQMLIWGVHVHVGMPERDRVMAVLSSLLNFHPHLQALSASSPIWSGIDTGYASNRALMFQQLPTAGLPFQFERWSEFEAFVGDELVTGVIEELSEVRWDVRPAPRIGTLENRICDGVPDLADLSSLVALMHCLVVDLDTRAAAGETLPTMPPWHVQENKWRAARYGLDAIVITDAESNERLVTEDLADHLERLAPVADRLGCSEELAQVAQIPVRGASYQRQRAVAERTGGDLVAVVDSVVRELRAGLG.

The protein belongs to the glutamate--cysteine ligase type 2 family. YbdK subfamily.

The catalysed reaction is L-cysteine + L-glutamate + ATP = gamma-L-glutamyl-L-cysteine + ADP + phosphate + H(+). ATP-dependent carboxylate-amine ligase which exhibits weak glutamate--cysteine ligase activity. This Nocardioides sp. (strain ATCC BAA-499 / JS614) protein is Putative glutamate--cysteine ligase 2-3.